A 378-amino-acid chain; its full sequence is Dual-specificity RNA methyltransferase RlmN 2 (378 aa).

The active-site Proton acceptor is E113. Residues 119–355 (TEDRRTLCVS…AAYIRRNRGR (237 aa)) form the Radical SAM core domain. C126 and C361 are oxidised to a cystine. Residues C133, C137, and C140 each contribute to the [4Fe-4S] cluster site. S-adenosyl-L-methionine-binding positions include 188 to 189 (GE), S220, 242 to 244 (SLN), and N318. Catalysis depends on C361, which acts as the S-methylcysteine intermediate.

It belongs to the radical SAM superfamily. RlmN family. The cofactor is [4Fe-4S] cluster.

It localises to the cytoplasm. The enzyme catalyses adenosine(2503) in 23S rRNA + 2 reduced [2Fe-2S]-[ferredoxin] + 2 S-adenosyl-L-methionine = 2-methyladenosine(2503) in 23S rRNA + 5'-deoxyadenosine + L-methionine + 2 oxidized [2Fe-2S]-[ferredoxin] + S-adenosyl-L-homocysteine. It catalyses the reaction adenosine(37) in tRNA + 2 reduced [2Fe-2S]-[ferredoxin] + 2 S-adenosyl-L-methionine = 2-methyladenosine(37) in tRNA + 5'-deoxyadenosine + L-methionine + 2 oxidized [2Fe-2S]-[ferredoxin] + S-adenosyl-L-homocysteine. In terms of biological role, specifically methylates position 2 of adenine 2503 in 23S rRNA and position 2 of adenine 37 in tRNAs. m2A2503 modification seems to play a crucial role in the proofreading step occurring at the peptidyl transferase center and thus would serve to optimize ribosomal fidelity. The protein is Dual-specificity RNA methyltransferase RlmN 2 of Myxococcus xanthus (strain DK1622).